Reading from the N-terminus, the 533-residue chain is Chromosomal replication initiator protein DnaA (533 aa).

Positions 1–72 are domain I, interacts with DnaA modulators; it reads MNDFWQHCSA…DLARDFWNAP (72 aa). Residues 72 to 196 are domain II; it reads PIEVQFVLDP…EAADSMYERS (125 aa). The segment at 83–120 is disordered; it reads AGQRSPAGATPLAPRAPLPSANPAPVAPGPASAPAVDA. The span at 96-110 shows a compositional bias: pro residues; it reads PRAPLPSANPAPVAP. The segment covering 111-120 has biased composition (low complexity); that stretch reads GPASAPAVDA. The tract at residues 197-413 is domain III, AAA+ region; that stretch reads KLNPVLTFDN…GALRKILAYS (217 aa). 4 residues coordinate ATP: Gly-241, Gly-243, Lys-244, and Thr-245. The domain IV, binds dsDNA stretch occupies residues 414 to 533; it reads KFHGREITIE…LHVLEQTLKG (120 aa).

It belongs to the DnaA family. As to quaternary structure, oligomerizes as a right-handed, spiral filament on DNA at oriC.

The protein localises to the cytoplasm. Functionally, plays an essential role in the initiation and regulation of chromosomal replication. ATP-DnaA binds to the origin of replication (oriC) to initiate formation of the DNA replication initiation complex once per cell cycle. Binds the DnaA box (a 9 base pair repeat at the origin) and separates the double-stranded (ds)DNA. Forms a right-handed helical filament on oriC DNA; dsDNA binds to the exterior of the filament while single-stranded (ss)DNA is stabiized in the filament's interior. The ATP-DnaA-oriC complex binds and stabilizes one strand of the AT-rich DNA unwinding element (DUE), permitting loading of DNA polymerase. After initiation quickly degrades to an ADP-DnaA complex that is not apt for DNA replication. Binds acidic phospholipids. In Burkholderia pseudomallei (strain 1710b), this protein is Chromosomal replication initiator protein DnaA.